A 374-amino-acid chain; its full sequence is Pectate lyase 1 (374 aa).

A signal peptide spans 1-21; it reads MDSPCLVALLVFSFVIGSCFS. Intrachain disulfides connect Cys28–Cys45 and Cys128–Cys147. A glycan (N-linked (GlcNAc...) asparagine) is linked at Asn158. Asp170 serves as a coordination point for Ca(2+). N-linked (GlcNAc...) (complex) asparagine glycosylation is present at Asn191. Asp194 and Asp198 together coordinate Ca(2+). The active site involves Arg250. An N-linked (GlcNAc...) asparagine glycan is attached at Asn293. Residues Cys306 and Cys312 are joined by a disulfide bond. Residue Asn354 is glycosylated (N-linked (GlcNAc...) (complex) asparagine).

The protein belongs to the polysaccharide lyase 1 family. Amb a subfamily. Ca(2+) is required as a cofactor. In terms of processing, N-glycosylated; contains fucose and xylose.

It carries out the reaction Eliminative cleavage of (1-&gt;4)-alpha-D-galacturonan to give oligosaccharides with 4-deoxy-alpha-D-galact-4-enuronosyl groups at their non-reducing ends.. It functions in the pathway glycan metabolism; pectin degradation; 2-dehydro-3-deoxy-D-gluconate from pectin: step 2/5. In terms of biological role, has pectate lyase activity. The polypeptide is Pectate lyase 1 (Cryptomeria japonica (Japanese cedar)).